The sequence spans 356 residues: sn-glycerol-3-phosphate import ATP-binding protein UgpC (356 aa).

The ABC transporter domain occupies 4–235 (LKLQAVTKSW…PASLFVASFI (232 aa)). ATP is bound at residue 37 to 44 (GPSGCGKS).

The protein belongs to the ABC transporter superfamily. sn-glycerol-3-phosphate importer (TC 3.A.1.1.3) family. In terms of assembly, the complex is composed of two ATP-binding proteins (UgpC), two transmembrane proteins (UgpA and UgpE) and a solute-binding protein (UgpB).

It localises to the cell inner membrane. It catalyses the reaction sn-glycerol 3-phosphate(out) + ATP + H2O = sn-glycerol 3-phosphate(in) + ADP + phosphate + H(+). In terms of biological role, part of the ABC transporter complex UgpBAEC involved in sn-glycerol-3-phosphate (G3P) import. Responsible for energy coupling to the transport system. The protein is sn-glycerol-3-phosphate import ATP-binding protein UgpC of Shigella boydii serotype 4 (strain Sb227).